We begin with the raw amino-acid sequence, 161 residues long: MAELNSLSELSAVTNAVEVNKNIAPVHVQKLDSQGRSYATGKRKDAVARVWIKPGTGKITVNNKEFEQYFARPVLRMILRQPIVIAKRDTQYDVVATVAGGGLSGQAGAIRHGISKALTYYEPALRTILKKGGFLTRDSRVVERKKYGKAKARRSFQFSKR.

The protein belongs to the universal ribosomal protein uS9 family.

This Bartonella bacilliformis (strain ATCC 35685 / KC583 / Herrer 020/F12,63) protein is Small ribosomal subunit protein uS9.